The sequence spans 324 residues: Acetyl-coenzyme A carboxylase carboxyl transferase subunit alpha (324 aa).

The CoA carboxyltransferase C-terminal domain occupies 37–291 (ILEDKLENLE…NVVLQKTFEQ (255 aa)).

It belongs to the AccA family. As to quaternary structure, acetyl-CoA carboxylase is a heterohexamer composed of biotin carboxyl carrier protein (AccB), biotin carboxylase (AccC) and two subunits each of ACCase subunit alpha (AccA) and ACCase subunit beta (AccD).

The protein localises to the cytoplasm. The enzyme catalyses N(6)-carboxybiotinyl-L-lysyl-[protein] + acetyl-CoA = N(6)-biotinyl-L-lysyl-[protein] + malonyl-CoA. It participates in lipid metabolism; malonyl-CoA biosynthesis; malonyl-CoA from acetyl-CoA: step 1/1. Component of the acetyl coenzyme A carboxylase (ACC) complex. First, biotin carboxylase catalyzes the carboxylation of biotin on its carrier protein (BCCP) and then the CO(2) group is transferred by the carboxyltransferase to acetyl-CoA to form malonyl-CoA. The chain is Acetyl-coenzyme A carboxylase carboxyl transferase subunit alpha from Bacillus cytotoxicus (strain DSM 22905 / CIP 110041 / 391-98 / NVH 391-98).